Here is a 285-residue protein sequence, read N- to C-terminus: Bifunctional protein FolD (285 aa).

Residues 166–168 and Ile-232 each bind NADP(+); that span reads GAS.

The protein belongs to the tetrahydrofolate dehydrogenase/cyclohydrolase family. Homodimer.

The catalysed reaction is (6R)-5,10-methylene-5,6,7,8-tetrahydrofolate + NADP(+) = (6R)-5,10-methenyltetrahydrofolate + NADPH. It carries out the reaction (6R)-5,10-methenyltetrahydrofolate + H2O = (6R)-10-formyltetrahydrofolate + H(+). Its pathway is one-carbon metabolism; tetrahydrofolate interconversion. Its function is as follows. Catalyzes the oxidation of 5,10-methylenetetrahydrofolate to 5,10-methenyltetrahydrofolate and then the hydrolysis of 5,10-methenyltetrahydrofolate to 10-formyltetrahydrofolate. The protein is Bifunctional protein FolD of Aliivibrio fischeri (strain MJ11) (Vibrio fischeri).